Reading from the N-terminus, the 200-residue chain is MQLNVSGAQAIEVSERTFGGEFNETLVHQAVVAYMAGGRQGSKAQKTRSEVSGGGKKPWRQKGTGRARAGTIRSPIWRGGGTTFAAKPRSHEQKLNKKMYRAALRSILAELVRLDRLVVVADFAVDAPKTKGLVAKLDTLGLKDVLIVTDGVDENLYLAARNLAHVDVRDVQGSDPVSLIAYDKVLVTVSAVKKFEELLG.

The interval 38-65 (GRQGSKAQKTRSEVSGGGKKPWRQKGTG) is disordered.

Belongs to the universal ribosomal protein uL4 family. As to quaternary structure, part of the 50S ribosomal subunit.

Its function is as follows. One of the primary rRNA binding proteins, this protein initially binds near the 5'-end of the 23S rRNA. It is important during the early stages of 50S assembly. It makes multiple contacts with different domains of the 23S rRNA in the assembled 50S subunit and ribosome. Forms part of the polypeptide exit tunnel. The sequence is that of Large ribosomal subunit protein uL4 from Pseudomonas aeruginosa (strain LESB58).